A 138-amino-acid polypeptide reads, in one-letter code: MRHGKVHRKLNRTAEHRKAMFANMCAALIKHEQIVTTLPKAKELRPIVEKLVTLGKKGGLDKRRQAISEMRDLDQVRKLFDVLAKRYADRQGGYTRIIKAGFRYGDNAPMAVIEFVDRDEDAKGKDSGPSQDGAAEAA.

The interval 118–138 (RDEDAKGKDSGPSQDGAAEAA) is disordered.

Belongs to the bacterial ribosomal protein bL17 family. As to quaternary structure, part of the 50S ribosomal subunit. Contacts protein L32.

In Rhodopseudomonas palustris (strain HaA2), this protein is Large ribosomal subunit protein bL17.